Reading from the N-terminus, the 258-residue chain is Acyl-[acyl-carrier-protein]--UDP-N-acetylglucosamine O-acyltransferase (258 aa).

It belongs to the transferase hexapeptide repeat family. LpxA subfamily. Homotrimer.

The protein localises to the cytoplasm. The enzyme catalyses a (3R)-hydroxyacyl-[ACP] + UDP-N-acetyl-alpha-D-glucosamine = a UDP-3-O-[(3R)-3-hydroxyacyl]-N-acetyl-alpha-D-glucosamine + holo-[ACP]. The protein operates within glycolipid biosynthesis; lipid IV(A) biosynthesis; lipid IV(A) from (3R)-3-hydroxytetradecanoyl-[acyl-carrier-protein] and UDP-N-acetyl-alpha-D-glucosamine: step 1/6. Its function is as follows. Involved in the biosynthesis of lipid A, a phosphorylated glycolipid that anchors the lipopolysaccharide to the outer membrane of the cell. The polypeptide is Acyl-[acyl-carrier-protein]--UDP-N-acetylglucosamine O-acyltransferase (Neisseria gonorrhoeae (strain ATCC 700825 / FA 1090)).